Consider the following 203-residue polypeptide: Cryptic neisserial protein 1 (203 aa).

A signal peptide spans 1–18 (MRRAILLILTLTVGTSLA).

This sequence belongs to the Cnp family.

The protein resides in the periplasm. The protein localises to the cytoplasm. In Neisseria gonorrhoeae (strain ATCC 700825 / FA 1090), this protein is Cryptic neisserial protein 1.